The primary structure comprises 231 residues: Probable transaldolase (231 aa).

The Schiff-base intermediate with substrate role is filled by lysine 83.

Belongs to the transaldolase family. Type 3B subfamily.

It localises to the cytoplasm. The catalysed reaction is D-sedoheptulose 7-phosphate + D-glyceraldehyde 3-phosphate = D-erythrose 4-phosphate + beta-D-fructose 6-phosphate. It functions in the pathway carbohydrate degradation; pentose phosphate pathway; D-glyceraldehyde 3-phosphate and beta-D-fructose 6-phosphate from D-ribose 5-phosphate and D-xylulose 5-phosphate (non-oxidative stage): step 2/3. Functionally, transaldolase is important for the balance of metabolites in the pentose-phosphate pathway. This chain is Probable transaldolase, found in Rhodospirillum centenum (strain ATCC 51521 / SW).